Reading from the N-terminus, the 740-residue chain is Arf-GAP with coiled-coil, ANK repeat and PH domain-containing protein 1 (740 aa).

Residues 1 to 226 (MTVKLDFEEC…RKELGAQLHQ (226 aa)) enclose the BAR domain. Positions 1–382 (MTVKLDFEEC…RGPGQGSGHL (382 aa)) are required for formation of endosomal tubules when overexpressed with PIP5K1C. Residues 265 to 360 (GLVMEGHLFK…WVSAVQSSIA (96 aa)) form the PH domain. Residues 405-527 (GHVVAQVQSV…KFLTKLPEIR (123 aa)) enclose the Arf-GAP domain. The interval 405–740 (GHVVAQVQSV…SRRSHDLHTL (336 aa)) is required for interaction with GULP1. A C4-type zinc finger spans residues 420–443 (CCDCREPAPEWASINLGVTLCIQC). Tyr485 is modified (3'-nitrotyrosine). Residues 525–566 (EIRGRRGGRGRPRGQPPVPPKPSIRPRPGSLRSKPEPPSEDL) are prevents interaction with ITGB1 when S-554 is not phosphorylated. The segment at 525–581 (EIRGRRGGRGRPRGQPPVPPKPSIRPRPGSLRSKPEPPSEDLGSLHPGALLFRASGH) is disordered. Over residues 538 to 549 (GQPPVPPKPSIR) the composition is skewed to pro residues. Ser554 bears the Phosphoserine; by PKB mark. ANK repeat units follow at residues 606–635 (DNATPLIQATAANSLLACEFLLQNGANVNQ), 639–668 (AGRGPLHHATILGHTGLACLFLKRGADLGA), and 672–702 (EGRDPLTIAMETANADIVTLLRLAKMREAEA).

Banana-shaped homodimer laterally assembling into tetramers, the tetramers further pack helically onto the membrane. Interacts with GTP-bound ARF6. Interacts with third cytoplasmic loop of SLC2A4/GLUT4. Interacts with CLTC. Interacts with GULP1. Forms a complex with GDP-bound ARF6 and GULP1. Interacts with ITGB1; required for ITGB1 recycling. Post-translationally, phosphorylation at Ser-554 by PKB is required for interaction with ITGB1, export of ITGB1 from recycling endosomes to the cell surface and ITGB1-dependent cell migration. In terms of tissue distribution, highest level in lung and spleen. Low level in heart, kidney, liver and pancreas.

It is found in the recycling endosome membrane. Its activity is regulated as follows. GAP activity stimulated by phosphatidylinositol 4,5-bisphosphate (PIP2) and phosphatidic acid. In terms of biological role, GTPase-activating protein (GAP) for ADP ribosylation factor 6 (ARF6) required for clathrin-dependent export of proteins from recycling endosomes to trans-Golgi network and cell surface. Required for regulated export of ITGB1 from recycling endosomes to the cell surface and ITGB1-dependent cell migration. The polypeptide is Arf-GAP with coiled-coil, ANK repeat and PH domain-containing protein 1 (ACAP1) (Homo sapiens (Human)).